The chain runs to 269 residues: 2-dehydro-3-deoxyphosphooctonate aldolase (269 aa).

It belongs to the KdsA family.

It is found in the cytoplasm. The catalysed reaction is D-arabinose 5-phosphate + phosphoenolpyruvate + H2O = 3-deoxy-alpha-D-manno-2-octulosonate-8-phosphate + phosphate. It functions in the pathway carbohydrate biosynthesis; 3-deoxy-D-manno-octulosonate biosynthesis; 3-deoxy-D-manno-octulosonate from D-ribulose 5-phosphate: step 2/3. The protein operates within bacterial outer membrane biogenesis; lipopolysaccharide biosynthesis. The chain is 2-dehydro-3-deoxyphosphooctonate aldolase from Chlamydia caviae (strain ATCC VR-813 / DSM 19441 / 03DC25 / GPIC) (Chlamydophila caviae).